The chain runs to 493 residues: Glutamyl-tRNA(Gln) amidotransferase subunit A (493 aa).

Catalysis depends on charge relay system residues lysine 78 and serine 158. Residue serine 182 is the Acyl-ester intermediate of the active site.

It belongs to the amidase family. GatA subfamily. As to quaternary structure, heterotrimer of A, B and C subunits.

It catalyses the reaction L-glutamyl-tRNA(Gln) + L-glutamine + ATP + H2O = L-glutaminyl-tRNA(Gln) + L-glutamate + ADP + phosphate + H(+). In terms of biological role, allows the formation of correctly charged Gln-tRNA(Gln) through the transamidation of misacylated Glu-tRNA(Gln) in organisms which lack glutaminyl-tRNA synthetase. The reaction takes place in the presence of glutamine and ATP through an activated gamma-phospho-Glu-tRNA(Gln). The sequence is that of Glutamyl-tRNA(Gln) amidotransferase subunit A from Beijerinckia indica subsp. indica (strain ATCC 9039 / DSM 1715 / NCIMB 8712).